The chain runs to 1615 residues: MESIKNQLIPLLKKNWTLKGKSKIKLLLEILLPLISIGILFGILYLSMIITRDFKERPASGFAFDIAHTKQLLIGSNGGLNSDQRNILDNLKLQVSIQHPEFSNDYINRCFVEFKDIESMDEYFHDPFNYRGVMGGVWFPDDSFNGNTIKYSIRVDSDFTHDNTQQFQDREDSQIYLRHYFTQIQTGVDQAILLTNQIAIPIFATGQRFPNPYISFWEKWTDGRKLILLNTGGVFITASLFATLFTLITNIVIEKETKILEGMKTMGLNSFAYYISNSIISLITLLSSTLLVSIILSASQLVHHVKWITLILILIPYSITLLLIAFILCKFFTKSKYAGLMAFLIVLLLSGIGIIIGRFNISPTLKLLSCLFSPIAISVANYVWCYKDLIVFKEVDINVNMVNEYEIIGMLVFDIFLYILILWYLDNVITGEYGIPKKWYFFLTKNYWRKNKKSNINNNGVFDVEATSCNRNSSYNEKNFEKIEHQLERPTISIRNLRKEFKTGDGNRIAVNDLSIDMYKNRIHSFLGPNGSGKSTTLSMLTGMIEPTSGDALINGFDIRNNIDEIRKHLGVCPQSDIIWEQLTVMEHLEFYAALKGFTNSNQRKVEATKIALEVGLGEKLNAPAGTLSGGQKRKLCLAIAFIGPNSDIILIDEPTSGLDASNRRLIWDFILKYRENKTIILVSHYLEECDILSNTISIIANGELKCNGSSLFLKNRFGVGYLLTISKEHNSINNSNLTKTISDIIFNHIPKGSLLSDAGTELCFRLPNESIGNFSNLFKELDDRKKQLSIENYGISITTLEEVFLKIISNSETNPNFNQSVLNTALKTNSSGIKSYQQLKGLLIKRVKTSRKDIKSFVLSILIPILILAGGLILYKNMRTIDIYNTVTQPLILDFNVYGKSVTPVSIDKVNETMTSLFDNSIGHSDRTTLVPYDELHDYLIHHYFGVPGALYFDFRYFKNVKFLHYNVFFNKDYLHALPIYINFVDSEILRSVTGKRIQTTSLPFEHIQSPLEVASLDVNFVAIVFFIILTLASFSLIAASHAGNISHERSTRVKRLLYISGLRKSIYWLSNLIWDYLQTFILVIFLTIVIIAVDDKFRTHFDLYISGVVLFTFSIIPLSYLMSFKFSSHGKAVGAIFAIHFGVGLIFTVISFILRVWAIKENSISFQFLTDIIEYCFYAISPFFCFSKILAIVTKFPGVSRVDQSFIDYWSFHFGLLPNAILFLHCIVWITWILLIDYSSEIKGKFTISKLFSNSPIPDSNEDSDVSNERIIVKQLLDNNTNGGSGNVYPIIFNNLYKKFNSVGNYKSKIAVYNSTLAIPTGQTFGLLGLNGCGKSTTLGMISGEISPTGGKIKLNGYDLIKNRNDALTSIGYCFQFDALIGLLSAREQLELYCRIKGVDESKIKDTVNAFIQMMDLESISNSNTSGYSGGNKRKVSLSIACIGSPSILLLDEISCGVDACVKRFMWNVLMELKKNKAIILTTHSIAECQAVCDKLTIMKDGKLQALGSNQHIKDKFGSGYSIEVKFKKEYLENGVELFLQSFPSASLIDNQHALSASFELPNPPNNPIKLSSIFSNIEQSLKFILDDYSVSQTSIEQIFIKLTKNSITNIDN.

The next 7 membrane-spanning stretches (helical) occupy residues 30–50 (ILLPLISIGILFGILYLSMII), 233–253 (GVFITASLFATLFTLITNIVI), 278–298 (SIISLITLLSSTLLVSIILSA), 308–328 (ITLILILIPYSITLLLIAFIL), 337–357 (YAGLMAFLIVLLLSGIGIIIG), 365–385 (LKLLSCLFSPIAISVANYVWC), and 405–425 (YEIIGMLVFDIFLYILILWYL). The ABC transmembrane type-2 domain maps to 182 to 383 (TQIQTGVDQA…PIAISVANYV (202 aa)). The ABC transporter 1 domain maps to 492-727 (ISIRNLRKEF…FGVGYLLTIS (236 aa)). An ATP-binding site is contributed by 528–535 (GPNGSGKS). A run of 7 helical transmembrane segments spans residues 855-875 (IKSFVLSILIPILILAGGLIL), 1022-1042 (FVAIVFFIILTLASFSLIAAS), 1075-1095 (IWDYLQTFILVIFLTIVIIAV), 1106-1126 (YISGVVLFTFSIIPLSYLMSF), 1135-1155 (VGAIFAIHFGVGLIFTVISFI), 1174-1194 (IIEYCFYAISPFFCFSKILAI), and 1218-1238 (LLPNAILFLHCIVWITWILLI). The region spanning 1293-1528 (IIFNNLYKKF…FGSGYSIEVK (236 aa)) is the ABC transporter 2 domain. 1331–1338 (GLNGCGKS) is a binding site for ATP.

It belongs to the ABC transporter superfamily. ABCA family.

The protein localises to the membrane. The polypeptide is ABC transporter A family member 4 (abcA4) (Dictyostelium discoideum (Social amoeba)).